Reading from the N-terminus, the 505-residue chain is Forkhead box protein O4 (505 aa).

Disordered stretches follow at residues 1-66 (MDPE…HSEP), 175-244 (SSWW…SPCP), and 257-276 (RPRS…PMRP). Residue Thr32 is modified to Phosphothreonine; by PKB/AKT1. Positions 97-215 (RRNAWGNQSY…RGRSKGPKKK (119 aa)) are required for interaction with FOXK1. The segment at residues 100-188 (AWGNQSYAEL…MLNPDGGKGG (89 aa)) is a DNA-binding region (fork-head). Ser197 is modified (phosphoserine; by PKB/AKT1). A compositionally biased stretch (basic residues) spans 205–216 (LRGRSKGPKKKP). Residues 257 to 271 (RPRSSSNASTVSTRL) are compositionally biased toward polar residues. At Ser262 the chain carries Phosphoserine; by PKB/AKT1.

As to quaternary structure, interacts with CREBBP/CBP, MYOCD, SIRT1, SRF and YWHAZ. Acetylated by CREBBP/CBP and deacetylated by SIRT1. Binding of YWHAZ inhibits DNA-binding. Interacts with USP7; the interaction is enhanced in presence of hydrogen peroxide and occurs independently of TP53. Interacts with NLK, and this inhibits monoubiquitination and transcriptional activity. Interacts with FOXK1; the interaction inhibits MEF2C transactivation activity. In terms of processing, acetylation by CREBBP/CBP is induced by oxidative stress and inhibits transcriptional activity. Deacetylation by SIRT1 is NAD-dependent and stimulates transcriptional activity. Post-translationally, phosphorylation by PKB/AKT1 inhibits transcriptional activity and is responsible for cytoplasmic localization. May be phosphorylated at multiple sites by NLK. Monoubiquitinated; monoubiquitination is induced by oxidative stress and reduced by deacetylase inhibitors; results in its relocalization to the nucleus and its increased transcriptional activity. Deubiquitinated by USP7; deubiquitination is induced by oxidative stress; enhances its interaction with USP7 and consequently, deubiquitination; increases its translocation to the cytoplasm and inhibits its transcriptional activity. Hydrogene-peroxide-induced ubiquitination and USP7-mediated deubiquitination have no major effect on its protein stability. Strongly expressed in brown adipose tissue and weakly in white adipose tissue (at protein level). Expressed in skeletal muscle.

It is found in the cytoplasm. It localises to the nucleus. Functionally, transcription factor involved in the regulation of the insulin signaling pathway. Binds to insulin-response elements (IREs) and can activate transcription of IGFBP1. Down-regulates expression of HIF1A and suppresses hypoxia-induced transcriptional activation of HIF1A-modulated genes. Also involved in negative regulation of the cell cycle. Involved in increased proteasome activity in embryonic stem cells (ESCs) by activating expression of PSMD11 in ESCs, leading to enhanced assembly of the 26S proteasome, followed by higher proteasome activity. Represses smooth muscle cell differentiation by inhibiting the transcriptional coactivator activity of myocardin. The polypeptide is Forkhead box protein O4 (Foxo4) (Mus musculus (Mouse)).